Consider the following 221-residue polypeptide: Peptide methionine sulfoxide reductase MsrA (221 aa).

C54 is a catalytic residue.

This sequence belongs to the MsrA Met sulfoxide reductase family.

The enzyme catalyses L-methionyl-[protein] + [thioredoxin]-disulfide + H2O = L-methionyl-(S)-S-oxide-[protein] + [thioredoxin]-dithiol. It carries out the reaction [thioredoxin]-disulfide + L-methionine + H2O = L-methionine (S)-S-oxide + [thioredoxin]-dithiol. Its function is as follows. Has an important function as a repair enzyme for proteins that have been inactivated by oxidation. Catalyzes the reversible oxidation-reduction of methionine sulfoxide in proteins to methionine. The polypeptide is Peptide methionine sulfoxide reductase MsrA (Methylobacterium sp. (strain 4-46)).